The chain runs to 127 residues: Large ribosomal subunit protein bL12 (127 aa).

Residues K77 and K88 each carry the N6-methyllysine modification.

It belongs to the bacterial ribosomal protein bL12 family. In terms of assembly, homodimer. Part of the ribosomal stalk of the 50S ribosomal subunit. Forms a multimeric L10(L12)X complex, where L10 forms an elongated spine to which 2 to 4 L12 dimers bind in a sequential fashion. Binds GTP-bound translation factors.

Functionally, forms part of the ribosomal stalk which helps the ribosome interact with GTP-bound translation factors. Is thus essential for accurate translation. The polypeptide is Large ribosomal subunit protein bL12 (Nitratidesulfovibrio vulgaris (strain DSM 19637 / Miyazaki F) (Desulfovibrio vulgaris)).